Consider the following 479-residue polypeptide: Bifunctional aspartate aminotransferase and glutamate/aspartate-prephenate aminotransferase (479 aa).

A chloroplast-targeting transit peptide spans 1-79 (MAATTTTSSS…VEVDISLSPR (79 aa)). Glycine 111 provides a ligand contact to L-aspartate. 172–173 (AK) is a binding site for pyridoxal 5'-phosphate. L-aspartate contacts are provided by tryptophan 197 and asparagine 247. Pyridoxal 5'-phosphate is bound by residues asparagine 247, tyrosine 279, and 307–309 (GFS). Lysine 310 is subject to N6-(pyridoxal phosphate)lysine. Arginine 318 lines the pyridoxal 5'-phosphate pocket. Residue arginine 449 coordinates L-aspartate.

The protein belongs to the class-I pyridoxal-phosphate-dependent aminotransferase family. Homodimer. Requires pyridoxal 5'-phosphate as cofactor. Expressed in flowers, pistils, stamens, ovaries and at lower levels in leaves and sepals.

Its subcellular location is the plastid. It localises to the chloroplast. The catalysed reaction is L-aspartate + 2-oxoglutarate = oxaloacetate + L-glutamate. The enzyme catalyses L-arogenate + oxaloacetate = prephenate + L-aspartate. It carries out the reaction L-arogenate + 2-oxoglutarate = prephenate + L-glutamate. Its pathway is amino-acid biosynthesis; L-phenylalanine biosynthesis; L-arogenate from prephenate (L-Asp route): step 1/1. It functions in the pathway amino-acid biosynthesis; L-phenylalanine biosynthesis; L-arogenate from prephenate (L-Glu route): step 1/1. In terms of biological role, prokaryotic-type aspartate aminotransferase. Also has a prenate transaminase activity. Involved in the aromatic amino acids biosynthesis pathway via the arogenate route. Required for the transamination of prephenate into arogenate. Can use 2-oxoglutarate, oxaloacetate and prephenate as substrates, but not phenylpyruvate or 4-hydroxyphenylpyruvate. This Petunia hybrida (Petunia) protein is Bifunctional aspartate aminotransferase and glutamate/aspartate-prephenate aminotransferase.